Consider the following 152-residue polypeptide: UPF0225 protein YchJ (152 aa).

Belongs to the UPF0225 family.

The polypeptide is UPF0225 protein YchJ (Escherichia coli O139:H28 (strain E24377A / ETEC)).